Reading from the N-terminus, the 277-residue chain is Large ribosomal subunit protein uL2 (277 aa).

The segment at 222-265 (GVAMNPIDHPHGGGEGRTSGGRHPVTPWGKPTKGKKTRTNKSTD) is disordered.

This sequence belongs to the universal ribosomal protein uL2 family. Part of the 50S ribosomal subunit. Forms a bridge to the 30S subunit in the 70S ribosome.

Functionally, one of the primary rRNA binding proteins. Required for association of the 30S and 50S subunits to form the 70S ribosome, for tRNA binding and peptide bond formation. It has been suggested to have peptidyltransferase activity; this is somewhat controversial. Makes several contacts with the 16S rRNA in the 70S ribosome. The polypeptide is Large ribosomal subunit protein uL2 (Bradyrhizobium sp. (strain BTAi1 / ATCC BAA-1182)).